The sequence spans 311 residues: Trem-like transcript 1 protein (311 aa).

The signal sequence occupies residues 1-15 (MGLTLLLLLLLGLEG). An Ig-like V-type domain is found at 16–121 (QGIVGSLPEV…PQILHRVSLN (106 aa)). Over 16–162 (QGIVGSLPEV…EPSQDEKSIP (147 aa)) the chain is Extracellular. Intrachain disulfides connect cysteine 38-cysteine 104 and cysteine 52-cysteine 59. Residues 163–183 (LIWGAVLLVGLLVAAVVLFAV) form a helical membrane-spanning segment. At 184-311 (MAKRKQGNRL…NPPNNQTPSS (128 aa)) the chain is on the cytoplasmic side. Residue cysteine 196 is the site of S-palmitoyl cysteine attachment. Residues 229 to 263 (VPHIRLDSPPSFDNTTYTSLPLDSPSGKPSLPAPS) are disordered. The segment covering 239–249 (SFDNTTYTSLP) has biased composition (polar residues). The ITIM motif lies at 279–284 (VTYATV). Residues 287–311 (PGGNKGGGTSCGPAQNPPNNQTPSS) form a disordered region.

As to quaternary structure, when phosphorylated, interacts with PTPN6. When phosphorylated, interacts with PTPN11. In terms of processing, phosphorylated on tyrosine residues. Detected in platelets, monocytic leukemia and in T-cell leukemia.

Its subcellular location is the cell membrane. It localises to the cytoplasm. In terms of biological role, cell surface receptor that may play a role in the innate and adaptive immune response. The chain is Trem-like transcript 1 protein (TREML1) from Homo sapiens (Human).